The following is a 471-amino-acid chain: Argininosuccinate lyase (471 aa).

The protein belongs to the lyase 1 family. Argininosuccinate lyase subfamily.

It localises to the cytoplasm. It catalyses the reaction 2-(N(omega)-L-arginino)succinate = fumarate + L-arginine. It participates in amino-acid biosynthesis; L-arginine biosynthesis; L-arginine from L-ornithine and carbamoyl phosphate: step 3/3. This chain is Argininosuccinate lyase, found in Ralstonia nicotianae (strain ATCC BAA-1114 / GMI1000) (Ralstonia solanacearum).